The sequence spans 413 residues: Cell division protein FtsZ 2 (413 aa).

Residues 130 to 132 (GTG), Glu169, Arg173, and Asp216 contribute to the GTP site.

It belongs to the FtsZ family. Homodimer. Polymerizes to form a dynamic ring structure in a strictly GTP-dependent manner. Interacts directly with several other division proteins.

Its subcellular location is the cytoplasm. Its function is as follows. Essential cell division protein that forms a contractile ring structure (Z ring) at the future cell division site. The regulation of the ring assembly controls the timing and the location of cell division. One of the functions of the FtsZ ring is to recruit other cell division proteins to the septum to produce a new cell wall between the dividing cells. Binds GTP and shows GTPase activity. The protein is Cell division protein FtsZ 2 of Pyrococcus abyssi (strain GE5 / Orsay).